The following is a 246-amino-acid chain: Chanoclavine-I dehydrogenase easD (246 aa).

A signal peptide spans 1–20 (MASVSSKIFAITGGASGIGA). The NADP(+) site is built by I18, D66, R132, Y169, and K173. The active-site Proton donor is Y169. The active-site Lowers pKa of active site Tyr is the K173.

The protein belongs to the short-chain dehydrogenases/reductases (SDR) family. As to quaternary structure, homotetramer.

It catalyses the reaction chanoclavine-I + NAD(+) = chanoclavine-I aldehyde + NADH + H(+). It functions in the pathway alkaloid biosynthesis; ergot alkaloid biosynthesis. Its function is as follows. Chanoclavine-I dehydrogenase; part of the gene cluster that mediates the biosynthesis of fungal ergot alkaloid. DmaW catalyzes the first step of ergot alkaloid biosynthesis by condensing dimethylallyl diphosphate (DMAP) and tryptophan to form 4-dimethylallyl-L-tryptophan. The second step is catalyzed by the methyltransferase easF that methylates 4-dimethylallyl-L-tryptophan in the presence of S-adenosyl-L-methionine, resulting in the formation of 4-dimethylallyl-L-abrine. The catalase easC and the FAD-dependent oxidoreductase easE then transform 4-dimethylallyl-L-abrine to chanoclavine-I which is further oxidized by easD in the presence of NAD(+), resulting in the formation of chanoclavine-I aldehyde. Chanoclavine-I aldehyde is the precursor of ergoamides and ergopeptines in Clavicipitaceae, and clavine-type alcaloids such as fumiclavine in Trichocomaceae. However, the metabolites downstream of chanoclavine-I aldehyde in Arthrodermataceae have not been identified yet. The polypeptide is Chanoclavine-I dehydrogenase easD (Arthroderma benhamiae (strain ATCC MYA-4681 / CBS 112371) (Trichophyton mentagrophytes)).